We begin with the raw amino-acid sequence, 95 residues long: Alpha-conotoxin-like Cp20.5 (95 aa).

Residues 1–24 (MPKLAVVLLVLLILPLSYFDAAGG) form the signal peptide. Residues 25 to 45 (QAVQGDRRGNGLARYLQRNGR) constitute a propeptide that is removed on maturation. Glutamate 50 bears the 4-carboxyglutamate mark. 4-hydroxyproline is present on proline 56. 4 disulfide bridges follow: cysteine 64–cysteine 73, cysteine 69–cysteine 81, cysteine 74–cysteine 91, and cysteine 79–cysteine 93.

The protein belongs to the conotoxin D superfamily. In terms of assembly, hetero-, homo- or pseudo-homodimer (identical sequence, different post-translational modifications). In terms of tissue distribution, expressed by the venom duct.

The protein localises to the secreted. Its function is as follows. Alpha-conotoxins act on postsynaptic membranes, they bind to the nicotinic acetylcholine receptors (nAChR) and thus inhibit them. Through its two C-terminal domains, this homodimeric protein would bind to two nAChR allosteric sites, located outside the nAChR C-loop of the principal binding face and at the adjacent binding interface in a clockwise direction. This toxin specifically blocks mammalian neuronal nAChR of the alpha-7/CHRNA7, alpha-3-beta-2/CHRNA3-CHRNB2 and alpha-4-beta-2/CHRNA4-CHRNB2 subtypes. This chain is Alpha-conotoxin-like Cp20.5, found in Conus capitaneus (Captain cone).